The following is a 120-amino-acid chain: NAD(P)H-quinone oxidoreductase subunit 3, chloroplastic (120 aa).

Transmembrane regions (helical) follow at residues 9–29 (IFWA…LISG), 64–84 (MFAL…PWAM), and 88–108 (VLGV…ILGL).

This sequence belongs to the complex I subunit 3 family. In terms of assembly, NDH is composed of at least 16 different subunits, 5 of which are encoded in the nucleus.

The protein resides in the plastid. It is found in the chloroplast thylakoid membrane. It catalyses the reaction a plastoquinone + NADH + (n+1) H(+)(in) = a plastoquinol + NAD(+) + n H(+)(out). It carries out the reaction a plastoquinone + NADPH + (n+1) H(+)(in) = a plastoquinol + NADP(+) + n H(+)(out). Its function is as follows. NDH shuttles electrons from NAD(P)H:plastoquinone, via FMN and iron-sulfur (Fe-S) centers, to quinones in the photosynthetic chain and possibly in a chloroplast respiratory chain. The immediate electron acceptor for the enzyme in this species is believed to be plastoquinone. Couples the redox reaction to proton translocation, and thus conserves the redox energy in a proton gradient. This chain is NAD(P)H-quinone oxidoreductase subunit 3, chloroplastic, found in Draba nemorosa (Woodland whitlowgrass).